The following is a 484-amino-acid chain: Folate synthesis bifunctional protein (484 aa).

The HPPK stretch occupies residues 15–141 (VIALGSNVGN…PFVLAPLVDL (127 aa)). The region spanning 202-470 (TYVMGILNLT…NVRDNVDAAR (269 aa)) is the Pterin-binding domain. Residues 204–484 (VMGILNLTPD…MMTKRFKNVD (281 aa)) are DHPS. Asparagine 209 provides a ligand contact to Mg(2+). Residues threonine 249, aspartate 286, asparagine 305, aspartate 378, lysine 423, and 458–460 (RVH) each bind (7,8-dihydropterin-6-yl)methyl diphosphate.

It in the N-terminal section; belongs to the HPPK family. The protein in the C-terminal section; belongs to the DHPS family. The cofactor is Mg(2+). As to expression, expressed exclusively in reproductive tissues.

The protein resides in the cytoplasm. It is found in the cytosol. It carries out the reaction 6-hydroxymethyl-7,8-dihydropterin + ATP = (7,8-dihydropterin-6-yl)methyl diphosphate + AMP + H(+). The catalysed reaction is (7,8-dihydropterin-6-yl)methyl diphosphate + 4-aminobenzoate = 7,8-dihydropteroate + diphosphate. It participates in cofactor biosynthesis; tetrahydrofolate biosynthesis; 2-amino-4-hydroxy-6-hydroxymethyl-7,8-dihydropteridine diphosphate from 7,8-dihydroneopterin triphosphate: step 4/4. The protein operates within cofactor biosynthesis; tetrahydrofolate biosynthesis; 7,8-dihydrofolate from 2-amino-4-hydroxy-6-hydroxymethyl-7,8-dihydropteridine diphosphate and 4-aminobenzoate: step 1/2. Its activity is regulated as follows. Inhibited by sulfanilamide. Catalyzes the first two consecutive steps of tetrahydrofolate biosynthesis. Plays a role in seed stress response and survival. The polypeptide is Folate synthesis bifunctional protein (Arabidopsis thaliana (Mouse-ear cress)).